Here is a 212-residue protein sequence, read N- to C-terminus: Holliday junction branch migration complex subunit RuvA (212 aa).

The segment at 1 to 70 (MISYLKGSPI…EDQQILYGFS (70 aa)) is domain I. A domain II region spans residues 71 to 149 (TTAERELFRQ…QWRKMVGVTV (79 aa)). A flexible linker region spans residues 150-160 (TSSAAMPSLEI). A domain III region spans residues 160–212 (ILEDIEMTLLALGYTNEEINKAISTLSQDNLMLKNTNTEEWIKEAIAWLSQGT).

It belongs to the RuvA family. As to quaternary structure, homotetramer. Forms an RuvA(8)-RuvB(12)-Holliday junction (HJ) complex. HJ DNA is sandwiched between 2 RuvA tetramers; dsDNA enters through RuvA and exits via RuvB. An RuvB hexamer assembles on each DNA strand where it exits the tetramer. Each RuvB hexamer is contacted by two RuvA subunits (via domain III) on 2 adjacent RuvB subunits; this complex drives branch migration. In the full resolvosome a probable DNA-RuvA(4)-RuvB(12)-RuvC(2) complex forms which resolves the HJ.

The protein localises to the cytoplasm. Its function is as follows. The RuvA-RuvB-RuvC complex processes Holliday junction (HJ) DNA during genetic recombination and DNA repair, while the RuvA-RuvB complex plays an important role in the rescue of blocked DNA replication forks via replication fork reversal (RFR). RuvA specifically binds to HJ cruciform DNA, conferring on it an open structure. The RuvB hexamer acts as an ATP-dependent pump, pulling dsDNA into and through the RuvAB complex. HJ branch migration allows RuvC to scan DNA until it finds its consensus sequence, where it cleaves and resolves the cruciform DNA. The protein is Holliday junction branch migration complex subunit RuvA of Crocosphaera subtropica (strain ATCC 51142 / BH68) (Cyanothece sp. (strain ATCC 51142)).